Consider the following 32-residue polypeptide: Cathepsin B-like cysteine proteinase (32 aa).

Positions 1–22 (KPNYKRQFEPFSDELIHYINLE) are cleaved as a propeptide — activation peptide.

It belongs to the peptidase C1 family.

Thiol protease. The polypeptide is Cathepsin B-like cysteine proteinase (Fasciola hepatica (Liver fluke)).